A 336-amino-acid chain; its full sequence is DNA-directed RNA polymerase subunit alpha (336 aa).

An alpha N-terminal domain (alpha-NTD) region spans residues 1-226 (MLIAQRPTLS…ELFGLARELN (226 aa)). Positions 243-336 (LAADMALPIE…SDDAFGDDEL (94 aa)) are alpha C-terminal domain (alpha-CTD).

It belongs to the RNA polymerase alpha chain family. As to quaternary structure, homodimer. The RNAP catalytic core consists of 2 alpha, 1 beta, 1 beta' and 1 omega subunit. When a sigma factor is associated with the core the holoenzyme is formed, which can initiate transcription.

It catalyses the reaction RNA(n) + a ribonucleoside 5'-triphosphate = RNA(n+1) + diphosphate. Functionally, DNA-dependent RNA polymerase catalyzes the transcription of DNA into RNA using the four ribonucleoside triphosphates as substrates. The polypeptide is DNA-directed RNA polymerase subunit alpha (Renibacterium salmoninarum (strain ATCC 33209 / DSM 20767 / JCM 11484 / NBRC 15589 / NCIMB 2235)).